The sequence spans 652 residues: Leucine-rich repeat-containing protein 4 (652 aa).

A signal peptide spans methionine 1–alanine 40. The Extracellular portion of the chain corresponds to methionine 1 to lysine 526. The LRRNT domain maps to glycine 41–serine 74. 2 cysteine pairs are disulfide-bonded: cysteine 45–cysteine 51 and cysteine 49–cysteine 60. LRR repeat units follow at residues asparagine 75 to histidine 96, histidine 99 to glycine 120, serine 123 to tyrosine 144, lysine 147 to arginine 168, serine 171 to glycine 193, asparagine 196 to valine 217, glycine 218 to glycine 239, serine 242 to glycine 263, and serine 266 to proline 287. The 53-residue stretch at asparagine 299–alanine 351 folds into the LRRCT domain. Intrachain disulfides connect cysteine 303–cysteine 328 and cysteine 305–cysteine 349. N-linked (GlcNAc...) asparagine glycosylation is found at asparagine 321 and asparagine 362. One can recognise an Ig-like C2-type domain in the interval proline 352–serine 441. The cysteines at positions 373 and 423 are disulfide-linked. A helical transmembrane segment spans residues isoleucine 527–tyrosine 547. Over lysine 548–isoleucine 652 the chain is Cytoplasmic.

As to quaternary structure, interacts (via LRR repeats) with NTNG2. Interacts with DLG4. Found in a complex with NMDA receptors. N-glycosylated. As to expression, mainly expressed in the brain. Expression is concentrated in the olfactory bulb, cortex, hippocampus and cerebellum in adult brain. Detected both embryonically and postnatally with stronger expression in postnatal stages.

The protein localises to the membrane. Its subcellular location is the postsynaptic cell membrane. Its function is as follows. Synaptic adhesion protein. Regulates the formation of exitatory synapses through the recruitment of pre-and-postsynaptic proteins. Organize the lamina/pathway-specific differentiation of dendrites. Plays an important role for auditory synaptic responses. Involved in the suppression of glioma. The sequence is that of Leucine-rich repeat-containing protein 4 (Lrrc4) from Rattus norvegicus (Rat).